The following is an 81-amino-acid chain: Adipogenin (81 aa).

The helical transmembrane segment at 16-36 threads the bilayer; the sequence is FLVFWLCLPVALLLFLLIIWL.

This sequence belongs to the adipogenin family. Highly expressed in subcutaneous, perirenal and mesecentric adipose tissue.

It is found in the membrane. It localises to the nucleus. Its function is as follows. Plays a role in stimulating adipocyte differentiation and development. In Bos taurus (Bovine), this protein is Adipogenin.